Reading from the N-terminus, the 399-residue chain is MSRYHTFTAADAVEYARQFGQIADPLALVTADEIGDGNLNLVFKIRDAAGMSRVIVKQALPYVRCVGESWPLTLDRARIEAETLLTHGQFCPQHTVNVLHHDAELAVMVQEDLSDHEIWRSELVKGKYYPQAAGQLAEYLAQTLFHTSDFYQSAQAKKAAVSRYTNPELCQITEDLFFTDPYIDHERNNFDPALLPEVLALRQDDALKLAVASLKHRFLSKAEALLHGDIHSGSIFVADGRLKAIDAEFGFYGPIGFDVGTALGNLLLNYCGLPGLAGPRDAAAGREQRLKDIHILWETFSHRFLALCEEKTQDSTLATAGYARLFLQQVWQDAVGYCGSELIRRTIGLAHVADLDSIADDEMRRACQRHALSLGRTLILAASRIDSIDDLIARIRQNG.

ATP-binding positions include asparagine 40, lysine 57, and 111–113; that span reads EDL. Aspartate 229 is a substrate binding site. 246–248 is an ATP binding site; that stretch reads DAE. Arginine 344 is a substrate binding site.

Belongs to the methylthioribose kinase family. Homodimer.

It catalyses the reaction 5-(methylsulfanyl)-D-ribose + ATP = 5-(methylsulfanyl)-alpha-D-ribose 1-phosphate + ADP + H(+). It participates in amino-acid biosynthesis; L-methionine biosynthesis via salvage pathway; S-methyl-5-thio-alpha-D-ribose 1-phosphate from S-methyl-5'-thioadenosine (hydrolase route): step 2/2. In terms of biological role, catalyzes the phosphorylation of methylthioribose into methylthioribose-1-phosphate. The sequence is that of Methylthioribose kinase from Yersinia enterocolitica serotype O:8 / biotype 1B (strain NCTC 13174 / 8081).